We begin with the raw amino-acid sequence, 284 residues long: Parvulin-like PPIase (284 aa).

Positions 1–20 (MKKLSIVLLSVSMLSSIAFA) are cleaved as a signal peptide. In terms of domain architecture, PpiC spans 139 to 232 (KEQIKVAHIL…YGWHIIKVLE (94 aa)).

The protein belongs to the PpiC/parvulin rotamase family.

The protein resides in the cell outer membrane. It carries out the reaction [protein]-peptidylproline (omega=180) = [protein]-peptidylproline (omega=0). The sequence is that of Parvulin-like PPIase (plp) from Rickettsia bellii (strain RML369-C).